The primary structure comprises 116 residues: Bacterial microcompartment shell protein CutR (116 aa).

Residues 10-108 (RIIQESVPGK…LEYFKNSLGF (99 aa)) form the BMC circularly permuted domain.

Belongs to the EutS/PduU family. As to quaternary structure, has been crystallized in 5 structures (all are mutated, 3 have an N-terminal His-tag), most are homohexameric with a central pore. In two the homohexamer lies flat with a beta-barrel on the flat face created by the protruding N termini of the six chains. In 2 others the hexamer is not flat but has a six-fold screw axis; the screw pitch is 33.8 or 41.9 Angstroms depending on the structure. Interacts with the BMC major shell protein.

The protein resides in the bacterial microcompartment. Its pathway is amine and polyamine metabolism; choline degradation. In terms of biological role, a minor shell protein of the choline degradation-specific bacterial microcompartment (BMC). Proteins such as this one with circularly permuted BMC domains may play a key role in conferring heterogeneity and flexibility in this BMC. This Streptococcus intermedius (strain ATCC 27335 / DSM 20573 / CCUG 32759 / CIP 103248 / JCM 12996 / LMG 17840 / NCTC 11324 / SK54 / 1877) protein is Bacterial microcompartment shell protein CutR.